A 359-amino-acid chain; its full sequence is Probable S-adenosylmethionine-dependent methyltransferase At5g38100 (359 aa).

The S-adenosyl-L-homocysteine site is built by tyrosine 19, cysteine 63, asparagine 68, aspartate 104, serine 133, and phenylalanine 134. Residues asparagine 172, aspartate 258, and phenylalanine 260 each coordinate Mg(2+).

This sequence belongs to the methyltransferase superfamily. Type-7 methyltransferase family. In terms of assembly, homodimer. The cofactor is Mg(2+).

The sequence is that of Probable S-adenosylmethionine-dependent methyltransferase At5g38100 from Arabidopsis thaliana (Mouse-ear cress).